We begin with the raw amino-acid sequence, 42 residues long: Potassium channel toxin gamma-KTx 1.6 (42 aa).

Disulfide bonds link Cys-5–Cys-23, Cys-11–Cys-34, Cys-20–Cys-39, and Cys-24–Cys-41.

The protein belongs to the ergtoxin family. Gamma-KTx 1 subfamily. As to expression, expressed by the venom gland.

Its subcellular location is the secreted. In terms of biological role, blocks Kv11/ERG potassium channels. This is Potassium channel toxin gamma-KTx 1.6 from Centruroides exilicauda (Bark scorpion).